A 97-amino-acid chain; its full sequence is Cytochrome c oxidase subunit 4 isoform 1, mitochondrial (97 aa).

A mitochondrion-targeting transit peptide spans 1-22 (MLATRVFNLIGRRAISTSVCVR). Residue Lys-29 is modified to N6-acetyllysine; alternate. Lys-29 is modified (N6-succinyllysine; alternate). The residue at position 53 (Lys-53) is an N6-acetyllysine. Ser-56 and Ser-58 each carry phosphoserine. Lys-60 is subject to N6-acetyllysine; alternate. Lys-60 carries the N6-succinyllysine; alternate modification. Lys-67 carries the post-translational modification N6-acetyllysine.

Belongs to the cytochrome c oxidase IV family. Component of the cytochrome c oxidase (complex IV, CIV), a multisubunit enzyme composed of 14 subunits. The complex is composed of a catalytic core of 3 subunits MT-CO1, MT-CO2 and MT-CO3, encoded in the mitochondrial DNA, and 11 supernumerary subunits COX4I, COX5A, COX5B, COX6A, COX6B, COX6C, COX7A, COX7B, COX7C, COX8 and NDUFA4, which are encoded in the nuclear genome. The complex exists as a monomer or a dimer and forms supercomplexes (SCs) in the inner mitochondrial membrane with NADH-ubiquinone oxidoreductase (complex I, CI) and ubiquinol-cytochrome c oxidoreductase (cytochrome b-c1 complex, complex III, CIII), resulting in different assemblies (supercomplex SCI(1)III(2)IV(1) and megacomplex MCI(2)III(2)IV(2)). Interacts with PHB2; the interaction decreases in absence of SPHK2. Interacts with AFG1L. Interacts with ABCB7; this interaction allows the regulation of cellular iron homeostasis and cellular reactive oxygen species (ROS) levels in cardiomyocytes. Interacts with FLVCR2; this interaction occurs in the absence of heme and is disrupted upon heme binding. Interacts with IRGC.

It localises to the mitochondrion inner membrane. It participates in energy metabolism; oxidative phosphorylation. Its function is as follows. Component of the cytochrome c oxidase, the last enzyme in the mitochondrial electron transport chain which drives oxidative phosphorylation. The respiratory chain contains 3 multisubunit complexes succinate dehydrogenase (complex II, CII), ubiquinol-cytochrome c oxidoreductase (cytochrome b-c1 complex, complex III, CIII) and cytochrome c oxidase (complex IV, CIV), that cooperate to transfer electrons derived from NADH and succinate to molecular oxygen, creating an electrochemical gradient over the inner membrane that drives transmembrane transport and the ATP synthase. Cytochrome c oxidase is the component of the respiratory chain that catalyzes the reduction of oxygen to water. Electrons originating from reduced cytochrome c in the intermembrane space (IMS) are transferred via the dinuclear copper A center (CU(A)) of subunit 2 and heme A of subunit 1 to the active site in subunit 1, a binuclear center (BNC) formed by heme A3 and copper B (CU(B)). The BNC reduces molecular oxygen to 2 water molecules using 4 electrons from cytochrome c in the IMS and 4 protons from the mitochondrial matrix. In Sus scrofa (Pig), this protein is Cytochrome c oxidase subunit 4 isoform 1, mitochondrial (COX4I1).